A 191-amino-acid chain; its full sequence is Putative zinc metalloprotease MJ0611 (191 aa).

Residues 20–40 (AIAFIFSYPNFSILVFIISLI) form a helical membrane-spanning segment. Zn(2+) is bound at residue histidine 49. The active site involves glutamate 50. Position 53 (histidine 53) interacts with Zn(2+). The next 4 helical transmembrane spans lie at 73-93 (LILG…PGAV), 110-130 (LAGP…MLIF), 133-153 (GSLL…LAGF), and 171-191 (PFIW…MMFW).

It belongs to the peptidase M50B family. Zn(2+) serves as cofactor.

It is found in the cell membrane. The protein is Putative zinc metalloprotease MJ0611 of Methanocaldococcus jannaschii (strain ATCC 43067 / DSM 2661 / JAL-1 / JCM 10045 / NBRC 100440) (Methanococcus jannaschii).